Reading from the N-terminus, the 308-residue chain is Ribosomal RNA small subunit methyltransferase H (308 aa).

S-adenosyl-L-methionine contacts are provided by residues 34-36 (GGH), D54, F80, D101, and Q108.

It belongs to the methyltransferase superfamily. RsmH family.

It localises to the cytoplasm. The enzyme catalyses cytidine(1402) in 16S rRNA + S-adenosyl-L-methionine = N(4)-methylcytidine(1402) in 16S rRNA + S-adenosyl-L-homocysteine + H(+). Its function is as follows. Specifically methylates the N4 position of cytidine in position 1402 (C1402) of 16S rRNA. This is Ribosomal RNA small subunit methyltransferase H from Ureaplasma parvum serovar 3 (strain ATCC 27815 / 27 / NCTC 11736).